The primary structure comprises 156 residues: Large ribosomal subunit protein eL24 (156 aa).

A compositionally biased stretch (basic and acidic residues) spans 110–129 (KESKAKKQETQAAKKAEKAK). The tract at residues 110 to 156 (KESKAKKQETQAAKKAEKAKNAANPKARVTSKQGAKGAPVKVAAKSR) is disordered. Positions 130–156 (NAANPKARVTSKQGAKGAPVKVAAKSR) are enriched in low complexity.

It belongs to the eukaryotic ribosomal protein eL24 family. In terms of assembly, component of the large ribosomal subunit (LSU). Mature N.crassa ribosomes consist of a small (40S) and a large (60S) subunit. The 40S small subunit contains 1 molecule of ribosomal RNA (18S rRNA) and at least 32 different proteins. The large 60S subunit contains 3 rRNA molecules (26S, 5.8S and 5S rRNA) and at least 42 different proteins.

The protein localises to the cytoplasm. Component of the ribosome, a large ribonucleoprotein complex responsible for the synthesis of proteins in the cell. The small ribosomal subunit (SSU) binds messenger RNAs (mRNAs) and translates the encoded message by selecting cognate aminoacyl-transfer RNA (tRNA) molecules. The large subunit (LSU) contains the ribosomal catalytic site termed the peptidyl transferase center (PTC), which catalyzes the formation of peptide bonds, thereby polymerizing the amino acids delivered by tRNAs into a polypeptide chain. The nascent polypeptides leave the ribosome through a tunnel in the LSU and interact with protein factors that function in enzymatic processing, targeting, and the membrane insertion of nascent chains at the exit of the ribosomal tunnel. In Neurospora crassa (strain ATCC 24698 / 74-OR23-1A / CBS 708.71 / DSM 1257 / FGSC 987), this protein is Large ribosomal subunit protein eL24 (rpl-24).